The following is a 127-amino-acid chain: Holo-[acyl-carrier-protein] synthase (127 aa).

Mg(2+)-binding residues include Asp-8 and Glu-56.

It belongs to the P-Pant transferase superfamily. AcpS family. The cofactor is Mg(2+).

The protein localises to the cytoplasm. The enzyme catalyses apo-[ACP] + CoA = holo-[ACP] + adenosine 3',5'-bisphosphate + H(+). In terms of biological role, transfers the 4'-phosphopantetheine moiety from coenzyme A to a Ser of acyl-carrier-protein. The polypeptide is Holo-[acyl-carrier-protein] synthase (Deinococcus deserti (strain DSM 17065 / CIP 109153 / LMG 22923 / VCD115)).